Reading from the N-terminus, the 208-residue chain is Thymidylate kinase (208 aa).

Residue Gly-10–Thr-17 coordinates ATP.

It belongs to the thymidylate kinase family.

It catalyses the reaction dTMP + ATP = dTDP + ADP. Its function is as follows. Phosphorylation of dTMP to form dTDP in both de novo and salvage pathways of dTTP synthesis. The sequence is that of Thymidylate kinase from Bacillus cereus (strain ATCC 14579 / DSM 31 / CCUG 7414 / JCM 2152 / NBRC 15305 / NCIMB 9373 / NCTC 2599 / NRRL B-3711).